Here is a 273-residue protein sequence, read N- to C-terminus: MADFAKLYNDPILSKKRIGSVEDPYLTYNETLTIFNGRALLTEIPNREFRVEVTGDNKEWREIEDGELDDNYFKVDYLMGVVFFNASNEGKSLTFNYSGEGASFFPASRIWIKRQGNMVIETLQGLIDEAEDTIIRMNERIAECERVTKRCQEVTAWCRQATSNYEEVVENTRKIYKPSVYTYSDIFTYYPTPQIGWTVTVKETKIVYRWDGFEWVDIGTSEVYEGFNILLSATEPFNANYIWYKDASFSPEKKRVVVSDTAPDSGQVWYKTD.

A coiled-coil region spans residues 119-149; sequence VIETLQGLIDEAEDTIIRMNERIAECERVTK.

The chain is SPbeta prophage-derived uncharacterized protein YomF (yomF) from Bacillus subtilis (strain 168).